The sequence spans 224 residues: Holliday junction branch migration complex subunit RuvA (224 aa).

A domain I region spans residues 1–67 (MISWLKGEKV…EDGTSLYGFI (67 aa)). The segment at 68–146 (EVNQRDLFRE…RFTDNDKTIH (79 aa)) is domain II. The segment at 147-157 (ENKNDIEANQF) is flexible linker. The segment at 157-224 (FSKYIDEIYL…ILMKLSEKST (68 aa)) is domain III.

Belongs to the RuvA family. Homotetramer. Forms an RuvA(8)-RuvB(12)-Holliday junction (HJ) complex. HJ DNA is sandwiched between 2 RuvA tetramers; dsDNA enters through RuvA and exits via RuvB. An RuvB hexamer assembles on each DNA strand where it exits the tetramer. Each RuvB hexamer is contacted by two RuvA subunits (via domain III) on 2 adjacent RuvB subunits; this complex drives branch migration. In the full resolvosome a probable DNA-RuvA(4)-RuvB(12)-RuvC(2) complex forms which resolves the HJ.

The protein localises to the cytoplasm. Functionally, the RuvA-RuvB-RuvC complex processes Holliday junction (HJ) DNA during genetic recombination and DNA repair, while the RuvA-RuvB complex plays an important role in the rescue of blocked DNA replication forks via replication fork reversal (RFR). RuvA specifically binds to HJ cruciform DNA, conferring on it an open structure. The RuvB hexamer acts as an ATP-dependent pump, pulling dsDNA into and through the RuvAB complex. HJ branch migration allows RuvC to scan DNA until it finds its consensus sequence, where it cleaves and resolves the cruciform DNA. This chain is Holliday junction branch migration complex subunit RuvA, found in Prochlorococcus marinus (strain NATL2A).